Here is a 363-residue protein sequence, read N- to C-terminus: MTQPTLFIDRDGTLIDEPKTDFQIDSLEKLKLERNVIPALLKLKDHYRFVMVSNQDGLGTSSFPQETFDKPHNAMMELFRSQGIEFDEVLICPHKPEDNCDCRKPKTKLLQKYIDRELFDPATSFVIGDRATDVQLAENLGIRALQYHPEKLNWDLIAEKLLGEAVTNIGDRQPRYAEVVRKTKETDIKVQVWLDETGVNDIKTGVGFFDHMLDQIATHGGFRMNISCKGDLWIDEHHTVEDTALALGTALKQAIGDKRGIARFGFVLPMDECQAQCAMDLSGRPFIKFKAEFKRDKVGDFSTELTEHFFQSIAFTMLATLHIKAKGDNDHHKIESLFKVFGRTLRQAIRIEGNELPSSKGVL.

Residues 1 to 174 (MTQPTLFIDR…AVTNIGDRQP (174 aa)) form a histidinol-phosphatase region. Asp9 acts as the Nucleophile in catalysis. Mg(2+) is bound by residues Asp9 and Asp11. Asp11 acts as the Proton donor in catalysis. Zn(2+)-binding residues include Cys92, His94, Cys100, and Cys102. Residue Asp129 participates in Mg(2+) binding. The tract at residues 175–363 (RYAEVVRKTK…NELPSSKGVL (189 aa)) is imidazoleglycerol-phosphate dehydratase.

This sequence in the N-terminal section; belongs to the histidinol-phosphatase family. In the C-terminal section; belongs to the imidazoleglycerol-phosphate dehydratase family. Mg(2+) serves as cofactor. Requires Zn(2+) as cofactor.

The protein localises to the cytoplasm. The enzyme catalyses D-erythro-1-(imidazol-4-yl)glycerol 3-phosphate = 3-(imidazol-4-yl)-2-oxopropyl phosphate + H2O. It catalyses the reaction L-histidinol phosphate + H2O = L-histidinol + phosphate. It participates in amino-acid biosynthesis; L-histidine biosynthesis; L-histidine from 5-phospho-alpha-D-ribose 1-diphosphate: step 6/9. It functions in the pathway amino-acid biosynthesis; L-histidine biosynthesis; L-histidine from 5-phospho-alpha-D-ribose 1-diphosphate: step 8/9. This is Histidine biosynthesis bifunctional protein HisB from Actinobacillus pleuropneumoniae serotype 5b (strain L20).